The sequence spans 1322 residues: MRAKRGAVGKVMMSGSRHNKLAESSRVPPLAREYISAMATDRELDRFMALSSTASSGASGSTHSCALGSVPPPGCASMEHESRPESGHRRRTKSSDHRSPDERGEAKEQLRELSVSPPPSKHKISQFTSPKSEVTKTKPNEYTIIPIVLASSPSFRSVAVTQTMSQSAEDIRTPTKSPQMQNKKTQTPESVLKSHKRLEWDPSADVGYCKRAMSMSNISTLERSVLEDCSWRQPTQQRPEANLDGVQPLLAEEPSPMLDKPTPPLACSTFVNRSERTKSLNSGMESSLSSNKGDPRKKCQRKSRRQDSEVSSCQTDCRSSSQKESTQGSSEAKDIRGNFTTEGTQCSYNRNDTEIDSIMEEEESIDRRKKDDLRISSRVQDPQISSRRPSVSSSRRESLSSYRRDDSRLNSPNSSRLGSEVSSRVESSRSSSRRESQTNSVYGSLSASSFDYHMHMAQEVEVLKHNQRRQQEMEVEPKKQLEKEQHQNDMQQGEPKGRELKDKNHHSGREQQEIQPLMRDQRKAEQRHEKDHQLEREQQGIQQLSKGQRKAKKREKEREQERQYTAAQFEKIRSNRRHVNKENQKPENPVVNPSTGVTASTSTTSLDVGSGSRPGGELDLGIDLLCSLVKSRSLSQGQKKKLVRDIARRISCLELTESSTSSRSLSSSSKEQLKVPTGSLQQVAATNTNQSNARSSSKAERIAPPVPAPRKRAAIGSSSPLPESVSYSGSTSGSGEVITQKTNIPNRNASTDADIEPLDLQDWLNPMTLSEIEFEERLKGGTDSERRRQLHWVKTEINRMQEFKNLLENISLPSKSQKKANTESATAAQIPSSMRCMGDQKERPDKEYLLRQEMSAEAESKEMENSETTTTPPPPVRIESVGVNVTNSDPSTLPAPPPTQPPPPPPHLNQRNLQNRKKMATPLLVSGSSTSGGGRSESVCSFVQQRQRQFREHYQNQQQQQFVLLQQQKLYQLQKQLNQQKDILIQRQQHCGQCAQCGHQRTCIHQQNCPRRQQEAEEQPDEREQYMQMQYAQAAGSAYATPHQSGSSGADKNEAIYYQVVNSQGVASYVQATMVSTETQNEASATGGAGGSAITRSTTTTTNSSSSMMCISSDMSVPMGMMNTCETTTTTTTHQYDDVACQRVRRGHKETTMNAESMQRQTLQVRPRAISYVIQFTPTGSSEVIEKPPSLQDQLQLARPEFCANAKQRKAILNEMQMIRNARRQELDNVLSQSTSMEALNRHLEQLPPPANTRVRLFTTREMKAITSKRCKNLPEVLAAQSRQEEEQRRRSNRLMRDVFNKRLKSRVASGQISLNHSMAIM.

Disordered stretches follow at residues 1 to 26, 53 to 135, 165 to 193, 252 to 442, 464 to 614, 657 to 752, 814 to 844, 856 to 911, and 1083 to 1109; these read MRAK…ESSR, TASS…SEVT, SQSA…SVLK, EEPS…NSVY, KHNQ…GSRP, ESST…ASTD, SKSQ…KERP, AEAE…LNQR, and ASAT…SSMM. Over residues 53 to 62 the composition is skewed to low complexity; that stretch reads TASSGASGST. A compositionally biased stretch (basic and acidic residues) spans 78–111; the sequence is MEHESRPESGHRRRTKSSDHRSPDERGEAKEQLR. A compositionally biased stretch (polar residues) spans 165–189; the sequence is SQSAEDIRTPTKSPQMQNKKTQTPE. Low complexity predominate over residues 279-292; it reads SLNSGMESSLSSNK. The segment covering 309–318 has biased composition (polar residues); sequence EVSSCQTDCR. The segment covering 319–330 has biased composition (low complexity); that stretch reads SSSQKESTQGSS. The segment covering 338–350 has biased composition (polar residues); the sequence is NFTTEGTQCSYNR. The span at 354–364 shows a compositional bias: acidic residues; sequence EIDSIMEEEES. Composition is skewed to basic and acidic residues over residues 365 to 375 and 394 to 408; these read IDRRKKDDLRI and SRRE…DDSR. Residues 409–430 show a composition bias toward low complexity; sequence LNSPNSSRLGSEVSSRVESSRS. 3 stretches are compositionally biased toward basic and acidic residues: residues 464 to 487, 495 to 512, and 519 to 538; these read KHNQ…EQHQ, PKGR…REQQ, and RDQR…EREQ. Low complexity-rich tracts occupy residues 594–605 and 657–669; these read STGVTASTSTTS and ESST…SSSS. The segment covering 678-696 has biased composition (polar residues); sequence GSLQQVAATNTNQSNARSS. Low complexity predominate over residues 714-735; sequence AIGSSSPLPESVSYSGSTSGSG. Polar residues-rich tracts occupy residues 737 to 751 and 822 to 832; these read VITQ…NAST and TESATAAQIPS. The span at 893–907 shows a compositional bias: pro residues; it reads LPAPPPTQPPPPPPH. Low complexity predominate over residues 1092 to 1107; the sequence is SAITRSTTTTTNSSSS. The tract at residues 1115–1322 is interaction with Klp10A; sequence MSVPMGMMNT…ISLNHSMAIM (208 aa). The ALMS motif stretch occupies residues 1190 to 1309; the sequence is SLQDQLQLAR…FNKRLKSRVA (120 aa).

The protein belongs to the ALMS1 family. In terms of assembly, interacts (via C-terminus) with Klp10A. Interacts with SAK. Expressed in all germlines, including germline stem cells and spermatogonia.

It localises to the cytoplasm. Its subcellular location is the cytoskeleton. The protein resides in the microtubule organizing center. The protein localises to the centrosome. It is found in the centriole. Its function is as follows. In asymmetrically dividing germline stem cells (GSCs), plays a critical role in ensuring centrosome duplication, which is essential for the production of centrosomes and centrioles in all downstream germ cells. Might recruit SAK for daughter centriole duplication. This Drosophila melanogaster (Fruit fly) protein is Centrosome-associated protein Alms1a.